Here is a 312-residue protein sequence, read N- to C-terminus: MDIIFYHPTFDTQWWIEALRKAIPQARVRAWKSGDNDSADYALVWHPPVEMLAGRDLKAVFALGAGVDSILSKLQAHPEMLNPSVPLFRLEDTGMGEQMQEYAVSQVLHWFRRFDDYRIQQNSSHWQPLPEYHWEDFTIGILGAGVLGSKVAQSLQTWRFPLRCWSRTRKSWPGVQSFAGREELSAFLSQCRVLINLLPNTPETVGIINQQLLEKLPDGAYLLNLARGVHVVEDDLLAALDSGKVKGAMLDVFNREPLPPESPLWQHPRVTITPHVAAITRPAEAVEYISRTIAQLEKGERVCGQVDRARGY.

Arginine 227 is an active-site residue. Residue histidine 275 is the Proton donor of the active site.

It belongs to the D-isomer specific 2-hydroxyacid dehydrogenase family. GhrA subfamily.

Its subcellular location is the cytoplasm. The enzyme catalyses glycolate + NADP(+) = glyoxylate + NADPH + H(+). It carries out the reaction (R)-glycerate + NAD(+) = 3-hydroxypyruvate + NADH + H(+). It catalyses the reaction (R)-glycerate + NADP(+) = 3-hydroxypyruvate + NADPH + H(+). Its function is as follows. Catalyzes the NADPH-dependent reduction of glyoxylate and hydroxypyruvate into glycolate and glycerate, respectively. The protein is Glyoxylate/hydroxypyruvate reductase A of Shigella boydii serotype 18 (strain CDC 3083-94 / BS512).